The sequence spans 650 residues: Zinc finger CCCH domain-containing protein 55 (650 aa).

The interval 67–162 (NSPSSTPTSP…THSGSADAAG (96 aa)) is disordered. Residues 105–128 (SPSSPSSTSPWSFNNCINGNNGNN) are compositionally biased toward low complexity. Residues 141-154 (PFSSHQSNGLSATH) show a composition bias toward polar residues. A C3H1-type zinc finger spans residues 232 to 254 (PCVYFSRGLCKNGESCKFIHGGY). The 77-residue stretch at 357–433 (RQIYLTFPAD…RVLVKPYKEK (77 aa)) folds into the RRM domain. Residues 566–650 (PVVNPMSVNN…PPVTTNNLMQ (85 aa)) are disordered. Positions 581-590 (AKEETNKSEL) are enriched in basic and acidic residues.

This chain is Zinc finger CCCH domain-containing protein 55, found in Arabidopsis thaliana (Mouse-ear cress).